A 500-amino-acid polypeptide reads, in one-letter code: MATIAFSRLSIYFCVLLLCHGSMAQLFGPNVNPWHNPRQGGFRECRFDRLQAFEPLRRVRSEAGVTEYFDEKNEQFQCTGTFVIRRVIEPQGLLVPRYSNTPGMVYIIQGRGSMGLTFPGCPATYQQQFQQFLPEGQSQSQKFRDEHQKIHQFRQGDIVALPAGVAHWFYNEGDAPVVALYVFDLNNNANQLEPRQKEFLLAGNNNREQQMYGRSIEQHSGQNIFSGFNNELLSEALGVNALVAKRLQGQNDQRGEIIRVKNGLKLLRPAFAQQQEQAQQQEQAQAQYQVQYSEEQQPSTRCNGLDENFCTIKARLNIENPSHADTYNPRAGRITRLNSQKFPILNLVQLSATRVNLYQNAILSPFWNVNAHSLVYIVQGHARVQVVSNLGKTVFNGVLRPGQLLIIPQHYVVLKKAEHEGCQYISFKTNANSMVSHLAGKNSIFRAMPVDVIANAYRISREQARSLKNNRGEELGAFTPRYQQQTYLGFSNESENEASE.

The N-terminal stretch at 1–24 (MATIAFSRLSIYFCVLLLCHGSMA) is a signal peptide. 2 disulfides stabilise this stretch: C45/C78 and C121/C310. Cupin type-1 domains follow at residues 50-245 (LQAF…LVAK) and 316-465 (LNIE…EQAR).

This sequence belongs to the 11S seed storage protein (globulins) family. As to quaternary structure, hexamer; each subunit is composed of an acidic and a basic chain derived from a single precursor and linked by a disulfide bond.

In terms of biological role, seed storage protein. The sequence is that of Glutelin type-B 5 (GLUB5) from Oryza sativa subsp. japonica (Rice).